The chain runs to 316 residues: Retinol dehydrogenase 12 (316 aa).

46 to 52 is an NADP(+) binding site; the sequence is GANTGIG. Substrate is bound at residue serine 175. The Proton acceptor role is filled by tyrosine 200.

This sequence belongs to the short-chain dehydrogenases/reductases (SDR) family. Widely expressed, mostly in retina, kidney, brain, skeletal muscle, pancreas and stomach.

It localises to the endoplasmic reticulum membrane. It catalyses the reaction all-trans-retinol + NADP(+) = all-trans-retinal + NADPH + H(+). The enzyme catalyses 11-cis-retinol + NADP(+) = 11-cis-retinal + NADPH + H(+). It carries out the reaction 9-cis-retinol + NADP(+) = 9-cis-retinal + NADPH + H(+). The catalysed reaction is a 4-hydroxynonen-1-ol + NADP(+) = a 4-hydroxynonenal + NADPH + H(+). It catalyses the reaction (E)-non-2-en-1-ol + NADP(+) = (E)-non-2-enal + NADPH + H(+). The enzyme catalyses (Z)-non-6-en-1-ol + NADP(+) = (Z)-non-6-enal + NADPH + H(+). It carries out the reaction nonan-1-ol + NADP(+) = nonanal + NADPH + H(+). It functions in the pathway cofactor metabolism; retinol metabolism. In terms of biological role, retinoids dehydrogenase/reductase with a clear preference for NADP. Displays high activity towards 9-cis, 11-cis and all-trans-retinal. Shows very weak activity towards 13-cis-retinol. Also exhibits activity, albeit with lower affinity than for retinaldehydes, towards lipid peroxidation products (C9 aldehydes) such as 4-hydroxynonenal and trans-2-nonenal. May play an important function in photoreceptor cells to detoxify 4-hydroxynonenal and potentially other toxic aldehyde products resulting from lipid peroxidation. Has no dehydrogenase activity towards steroids. This is Retinol dehydrogenase 12 (RDH12) from Homo sapiens (Human).